The primary structure comprises 430 residues: Adenylosuccinate synthetase (430 aa).

Residues 13-19 and 41-43 contribute to the GTP site; these read GDEGKGK and GHT. The active-site Proton acceptor is Asp-14. Residues Asp-14 and Gly-41 each contribute to the Mg(2+) site. Residues 14-17, 39-42, Thr-130, Arg-144, Gln-225, Thr-240, and Arg-304 contribute to the IMP site; these read DEGK and NAGH. The active-site Proton donor is His-42. 300–306 contributes to the substrate binding site; it reads ASTGRPR. GTP contacts are provided by residues Arg-306, 332 to 334, and 414 to 416; these read KLD and STG.

This sequence belongs to the adenylosuccinate synthetase family. Homodimer. Mg(2+) is required as a cofactor.

It localises to the cytoplasm. The catalysed reaction is IMP + L-aspartate + GTP = N(6)-(1,2-dicarboxyethyl)-AMP + GDP + phosphate + 2 H(+). The protein operates within purine metabolism; AMP biosynthesis via de novo pathway; AMP from IMP: step 1/2. Its function is as follows. Plays an important role in the de novo pathway of purine nucleotide biosynthesis. Catalyzes the first committed step in the biosynthesis of AMP from IMP. The sequence is that of Adenylosuccinate synthetase from Stenotrophomonas maltophilia (strain R551-3).